The chain runs to 305 residues: Oxygen-dependent coproporphyrinogen-III oxidase (305 aa).

A substrate-binding site is contributed by S93. The a divalent metal cation site is built by H97 and H107. H107 serves as the catalytic Proton donor. 109–111 (NVR) contacts substrate. 2 residues coordinate a divalent metal cation: H146 and H176. Residues 241 to 276 (YVEFNLVFDRGTLFGLQSGGRTESILMSLPPQVRWG) form an important for dimerization region. Residue 259 to 261 (GGR) participates in substrate binding.

Belongs to the aerobic coproporphyrinogen-III oxidase family. In terms of assembly, homodimer. A divalent metal cation is required as a cofactor.

The protein localises to the cytoplasm. The catalysed reaction is coproporphyrinogen III + O2 + 2 H(+) = protoporphyrinogen IX + 2 CO2 + 2 H2O. It functions in the pathway porphyrin-containing compound metabolism; protoporphyrin-IX biosynthesis; protoporphyrinogen-IX from coproporphyrinogen-III (O2 route): step 1/1. Its function is as follows. Involved in the heme biosynthesis. Catalyzes the aerobic oxidative decarboxylation of propionate groups of rings A and B of coproporphyrinogen-III to yield the vinyl groups in protoporphyrinogen-IX. This Pseudomonas aeruginosa (strain UCBPP-PA14) protein is Oxygen-dependent coproporphyrinogen-III oxidase.